Consider the following 262-residue polypeptide: Hemin import ATP-binding protein HmuV (262 aa).

The ABC transporter domain occupies 2 to 241 (IRASDISVRL…ETMEAVFGCR (240 aa)). 34–41 (GPNGSGKT) is a binding site for ATP.

Belongs to the ABC transporter superfamily. Heme (hemin) importer (TC 3.A.1.14.5) family. As to quaternary structure, the complex is composed of two ATP-binding proteins (HmuV), two transmembrane proteins (HmuU) and a solute-binding protein (HmuT).

Its subcellular location is the cell inner membrane. Its function is as follows. Part of the ABC transporter complex HmuTUV involved in hemin import. Responsible for energy coupling to the transport system. The chain is Hemin import ATP-binding protein HmuV from Rhizobium meliloti (strain 1021) (Ensifer meliloti).